Consider the following 302-residue polypeptide: Tetrahydromethanopterin S-methyltransferase subunit E (302 aa).

A run of 6 helical transmembrane segments spans residues 3-23, 86-106, 132-152, 155-175, 233-253, and 259-279; these read PLIS…AGAS, PLFA…TFAV, ITPI…VSYL, VVLG…ITIG, PVTG…TTIF, and LGWL…IWNW.

The protein belongs to the MtrE family. As to quaternary structure, the complex is composed of 8 subunits; MtrA, MtrB, MtrC, MtrD, MtrE, MtrF, MtrG and MtrH.

It localises to the cell membrane. The enzyme catalyses 5-methyl-5,6,7,8-tetrahydromethanopterin + coenzyme M + 2 Na(+)(in) = 5,6,7,8-tetrahydromethanopterin + methyl-coenzyme M + 2 Na(+)(out). It functions in the pathway one-carbon metabolism; methanogenesis from CO(2); methyl-coenzyme M from 5,10-methylene-5,6,7,8-tetrahydromethanopterin: step 2/2. Part of a complex that catalyzes the formation of methyl-coenzyme M and tetrahydromethanopterin from coenzyme M and methyl-tetrahydromethanopterin. This is an energy-conserving, sodium-ion translocating step. In Methanosarcina barkeri (strain Fusaro / DSM 804), this protein is Tetrahydromethanopterin S-methyltransferase subunit E.